Reading from the N-terminus, the 429-residue chain is C4-dicarboxylate transport protein (429 aa).

A run of 8 helical transmembrane segments spans residues 3–23 (VSIF…GVLL), 44–64 (LIKM…IAGM), 76–96 (IALL…LVVV), 144–164 (AFAS…GFAL), 184–204 (VIFG…FGAM), 222–242 (LILC…GTIA), 331–351 (TLLV…GSGF), and 352–372 (IVLA…LALI).

Belongs to the dicarboxylate/amino acid:cation symporter (DAACS) (TC 2.A.23) family.

It localises to the cell inner membrane. Functionally, responsible for the transport of dicarboxylates such as succinate, fumarate, and malate from the periplasm across the membrane. This is C4-dicarboxylate transport protein from Yersinia pseudotuberculosis serotype O:1b (strain IP 31758).